A 341-amino-acid chain; its full sequence is tRNA N6-adenosine threonylcarbamoyltransferase (341 aa).

Fe cation is bound by residues His-111 and His-115. Substrate contacts are provided by residues 134–138 (LVSGG), Asp-167, Gly-180, and Asn-276. Residue Asp-304 coordinates Fe cation.

It belongs to the KAE1 / TsaD family. Fe(2+) serves as cofactor.

It is found in the cytoplasm. The enzyme catalyses L-threonylcarbamoyladenylate + adenosine(37) in tRNA = N(6)-L-threonylcarbamoyladenosine(37) in tRNA + AMP + H(+). In terms of biological role, required for the formation of a threonylcarbamoyl group on adenosine at position 37 (t(6)A37) in tRNAs that read codons beginning with adenine. Is involved in the transfer of the threonylcarbamoyl moiety of threonylcarbamoyl-AMP (TC-AMP) to the N6 group of A37, together with TsaE and TsaB. TsaD likely plays a direct catalytic role in this reaction. This is tRNA N6-adenosine threonylcarbamoyltransferase from Pseudomonas fluorescens (strain SBW25).